Here is a 318-residue protein sequence, read N- to C-terminus: Ribosomal RNA small subunit methyltransferase H (318 aa).

S-adenosyl-L-methionine is bound by residues 34-36 (GGY), Asp-52, Phe-79, Asp-100, and Gln-107. The interval 286 to 318 (GPAPDEARANPRARSAKLRAAARTAAPAWETVS) is disordered. Positions 303–318 (LRAAARTAAPAWETVS) are enriched in low complexity.

It belongs to the methyltransferase superfamily. RsmH family.

Its subcellular location is the cytoplasm. It carries out the reaction cytidine(1402) in 16S rRNA + S-adenosyl-L-methionine = N(4)-methylcytidine(1402) in 16S rRNA + S-adenosyl-L-homocysteine + H(+). In terms of biological role, specifically methylates the N4 position of cytidine in position 1402 (C1402) of 16S rRNA. The chain is Ribosomal RNA small subunit methyltransferase H from Paramagnetospirillum magneticum (strain ATCC 700264 / AMB-1) (Magnetospirillum magneticum).